The following is a 225-amino-acid chain: Protein E26 (225 aa).

In terms of assembly, interacts with proteins IE0 and IE1. Interacts with protein FP25K. Interacts with host importin alpha-16. Post-translationally, palmitoylated.

The protein localises to the host nucleus inner membrane. The protein resides in the virion. It is found in the host cytoplasm. Its subcellular location is the host nucleus. Plays a role in the sorting of ODV envelope proteins to the host inner nuclear membrane. May facilitate the fusion and release of nucleocapsids into the cytoplasm. Modulates the expression levels of IE0 and IE1. This is Protein E26 (DA26) from Lepidoptera (butterflies and moths).